We begin with the raw amino-acid sequence, 462 residues long: A-type ATP synthase subunit B (462 aa).

The protein belongs to the ATPase alpha/beta chains family. In terms of assembly, has multiple subunits with at least A(3), B(3), C, D, E, F, H, I and proteolipid K(x).

It is found in the cell membrane. In terms of biological role, component of the A-type ATP synthase that produces ATP from ADP in the presence of a proton gradient across the membrane. The B chain is a regulatory subunit. In Methanococcus maripaludis (strain C7 / ATCC BAA-1331), this protein is A-type ATP synthase subunit B.